Here is a 188-residue protein sequence, read N- to C-terminus: Elongation factor P (188 aa).

The protein belongs to the elongation factor P family.

It is found in the cytoplasm. Its pathway is protein biosynthesis; polypeptide chain elongation. Its function is as follows. Involved in peptide bond synthesis. Stimulates efficient translation and peptide-bond synthesis on native or reconstituted 70S ribosomes in vitro. Probably functions indirectly by altering the affinity of the ribosome for aminoacyl-tRNA, thus increasing their reactivity as acceptors for peptidyl transferase. The sequence is that of Elongation factor P from Rhodopseudomonas palustris (strain HaA2).